Consider the following 432-residue polypeptide: ATP-dependent RNA helicase RhlB (432 aa).

The Q motif signature appears at 9–37 (QNFADLGLQPQVIDGLNAKGFIKCTPIQA). The 180-residue stretch at 40–219 (LPVLLAGQDI…FEHMQEPEHV (180 aa)) folds into the Helicase ATP-binding domain. 53–60 (AQTGTGKT) is an ATP binding site. The DEAD box motif lies at 165-168 (DEAD). The 146-residue stretch at 245–390 (ALLQTLIEEE…QSDYDASALL (146 aa)) folds into the Helicase C-terminal domain. The tract at residues 396–432 (PLRLQRRPQQNRRNNNGQRQGGNRKHTRPRQPRNTQS) is disordered. The span at 417-426 (GNRKHTRPRQ) shows a compositional bias: basic residues.

This sequence belongs to the DEAD box helicase family. RhlB subfamily. As to quaternary structure, component of the RNA degradosome, which is a multiprotein complex involved in RNA processing and mRNA degradation.

Its subcellular location is the cytoplasm. The enzyme catalyses ATP + H2O = ADP + phosphate + H(+). Functionally, DEAD-box RNA helicase involved in RNA degradation. Has RNA-dependent ATPase activity and unwinds double-stranded RNA. The sequence is that of ATP-dependent RNA helicase RhlB from Aliivibrio fischeri (strain ATCC 700601 / ES114) (Vibrio fischeri).